Here is a 718-residue protein sequence, read N- to C-terminus: Protein Hook homolog 1 (718 aa).

Residues 8-124 (PLLCDSLILW…RLMQLILGCA (117 aa)) enclose the Calponin-homology (CH) domain. Coiled coils occupy residues 164 to 428 (SASD…ELRY) and 473 to 652 (LLLQ…AKLR).

This sequence belongs to the hook family. In terms of assembly, interacts with microtubules.

The protein resides in the cytoplasm. The protein localises to the cytoskeleton. In terms of biological role, may function to promote vesicle trafficking and/or fusion. The sequence is that of Protein Hook homolog 1 (HOOK1) from Gallus gallus (Chicken).